The following is a 510-amino-acid chain: ATP synthase subunit alpha (510 aa).

169-176 (GDRQTGKT) is an ATP binding site.

The protein belongs to the ATPase alpha/beta chains family. As to quaternary structure, F-type ATPases have 2 components, CF(1) - the catalytic core - and CF(0) - the membrane proton channel. CF(1) has five subunits: alpha(3), beta(3), gamma(1), delta(1), epsilon(1). CF(0) has three main subunits: a(1), b(2) and c(9-12). The alpha and beta chains form an alternating ring which encloses part of the gamma chain. CF(1) is attached to CF(0) by a central stalk formed by the gamma and epsilon chains, while a peripheral stalk is formed by the delta and b chains.

It is found in the cell inner membrane. The catalysed reaction is ATP + H2O + 4 H(+)(in) = ADP + phosphate + 5 H(+)(out). Functionally, produces ATP from ADP in the presence of a proton gradient across the membrane. The alpha chain is a regulatory subunit. The sequence is that of ATP synthase subunit alpha from Nitrobacter hamburgensis (strain DSM 10229 / NCIMB 13809 / X14).